Reading from the N-terminus, the 321-residue chain is Small ribosomal subunit biogenesis GTPase RsgA (321 aa).

In terms of domain architecture, CP-type G spans 89–248; sequence QSWINRPPVA…VADTPGFNRP (160 aa). Residues 138-141 and 190-198 each bind GTP; these read TKRD and GPSGVGKTS. Residues cysteine 273, cysteine 278, histidine 280, and cysteine 286 each coordinate Zn(2+).

The protein belongs to the TRAFAC class YlqF/YawG GTPase family. RsgA subfamily. As to quaternary structure, monomer. Associates with 30S ribosomal subunit, binds 16S rRNA. Zn(2+) serves as cofactor.

It localises to the cytoplasm. One of several proteins that assist in the late maturation steps of the functional core of the 30S ribosomal subunit. Helps release RbfA from mature subunits. May play a role in the assembly of ribosomal proteins into the subunit. Circularly permuted GTPase that catalyzes slow GTP hydrolysis, GTPase activity is stimulated by the 30S ribosomal subunit. This is Small ribosomal subunit biogenesis GTPase RsgA from Prochlorococcus marinus (strain MIT 9303).